The following is a 118-amino-acid chain: Large ribosomal subunit protein bL17 (118 aa).

This sequence belongs to the bacterial ribosomal protein bL17 family. Part of the 50S ribosomal subunit. Contacts protein L32.

The chain is Large ribosomal subunit protein bL17 from Thermus thermophilus (strain ATCC BAA-163 / DSM 7039 / HB27).